Consider the following 312-residue polypeptide: Telomere-binding protein OPG077 (312 aa).

This sequence belongs to the orthopoxvirus OPG077 family.

The protein localises to the virion. Its function is as follows. DNA-binding protein which binds to the hairpin form of the viral telomeric sequence. Required for the production of mature virions (MV). The sequence is that of Telomere-binding protein OPG077 (OPG077) from Monkeypox virus.